The chain runs to 295 residues: Pyridoxal 5'-phosphate synthase subunit PdxS (295 aa).

D25 contacts D-ribose 5-phosphate. K82 functions as the Schiff-base intermediate with D-ribose 5-phosphate in the catalytic mechanism. A D-ribose 5-phosphate-binding site is contributed by G154. Residue R166 participates in D-glyceraldehyde 3-phosphate binding. D-ribose 5-phosphate is bound by residues G215 and 236-237 (GS).

This sequence belongs to the PdxS/SNZ family. In the presence of PdxT, forms a dodecamer of heterodimers.

It catalyses the reaction aldehydo-D-ribose 5-phosphate + D-glyceraldehyde 3-phosphate + L-glutamine = pyridoxal 5'-phosphate + L-glutamate + phosphate + 3 H2O + H(+). It functions in the pathway cofactor biosynthesis; pyridoxal 5'-phosphate biosynthesis. Catalyzes the formation of pyridoxal 5'-phosphate from ribose 5-phosphate (RBP), glyceraldehyde 3-phosphate (G3P) and ammonia. The ammonia is provided by the PdxT subunit. Can also use ribulose 5-phosphate and dihydroxyacetone phosphate as substrates, resulting from enzyme-catalyzed isomerization of RBP and G3P, respectively. In Bacillus cereus (strain Q1), this protein is Pyridoxal 5'-phosphate synthase subunit PdxS.